Reading from the N-terminus, the 415-residue chain is Gamma-glutamyl phosphate reductase (415 aa).

This sequence belongs to the gamma-glutamyl phosphate reductase family.

It is found in the cytoplasm. It catalyses the reaction L-glutamate 5-semialdehyde + phosphate + NADP(+) = L-glutamyl 5-phosphate + NADPH + H(+). Its pathway is amino-acid biosynthesis; L-proline biosynthesis; L-glutamate 5-semialdehyde from L-glutamate: step 2/2. Catalyzes the NADPH-dependent reduction of L-glutamate 5-phosphate into L-glutamate 5-semialdehyde and phosphate. The product spontaneously undergoes cyclization to form 1-pyrroline-5-carboxylate. This is Gamma-glutamyl phosphate reductase from Mycobacterium sp. (strain JLS).